Reading from the N-terminus, the 198-residue chain is NAD(P)H dehydrogenase (quinone) (198 aa).

Residues 4–189 (ILVLYYSMYG…SIARYQGEYV (186 aa)) form the Flavodoxin-like domain. FMN contacts are provided by residues 10–15 (SMYGHI) and 78–80 (TRF). NAD(+) is bound at residue Tyr12. Trp98 lines the substrate pocket. FMN-binding positions include 113–118 (STGTGG) and His133.

It belongs to the WrbA family. FMN is required as a cofactor.

The catalysed reaction is a quinone + NADH + H(+) = a quinol + NAD(+). It carries out the reaction a quinone + NADPH + H(+) = a quinol + NADP(+). The protein is NAD(P)H dehydrogenase (quinone) of Salmonella agona (strain SL483).